Consider the following 469-residue polypeptide: SVGFKAGVKEYKLTYYTPEYETKETDILAAFRVTPQPGVPPEEAGAAVAAESSTGTWTTVWTDGLTSLDRYKGRCYHIEPVPGEEDQYIAYVAYPLDLFEEGSVTNMFTSIVGNVFGFKALRALRLEDLRIPVAYTKXFQGPXHGIQVERDKLNKYGRPLLGCTIKPKLGLSAKNYGRAVYECLRGGLDFTKDDENVNSQPFMRWRDRFLFCAEAFYKAQAETGEIKGHYLNATAGTCEEMIKRAVFARELGVPIXMHDYLTGGFTANTSLAHYCRDNGLLLHIHRAMHAVIDRQKNHGMHFRVLAKALRLSGGDHIHAGTVVGKLEGERDTTLGFVDLLRDDFIEKDRSRGIYFTQDWVSLPGVLPVRSGGIHVWHMPALTEIFGDDSVLQFGGGTLGHPWGNAPGAVANRVALEACVKARNEGRDLAAEGNEIIREASKWSPELAAACEVWKEIRFNFKAVDTLDPS.

Lysine 5 is modified (N6,N6,N6-trimethyllysine). Substrate is bound by residues asparagine 114 and threonine 164. Lysine 166 acts as the Proton acceptor in catalysis. Lysine 168 contacts substrate. The Mg(2+) site is built by lysine 192, aspartate 194, and glutamate 195. Lysine 192 is subject to N6-carboxylysine. The active-site Proton acceptor is histidine 285. 3 residues coordinate substrate: arginine 286, histidine 318, and serine 370.

It belongs to the RuBisCO large chain family. Type I subfamily. Heterohexadecamer of 8 large chains and 8 small chains; disulfide-linked. The disulfide link is formed within the large subunit homodimers. Mg(2+) is required as a cofactor. The disulfide bond which can form in the large chain dimeric partners within the hexadecamer appears to be associated with oxidative stress and protein turnover.

It localises to the plastid. The protein resides in the chloroplast. The catalysed reaction is 2 (2R)-3-phosphoglycerate + 2 H(+) = D-ribulose 1,5-bisphosphate + CO2 + H2O. The enzyme catalyses D-ribulose 1,5-bisphosphate + O2 = 2-phosphoglycolate + (2R)-3-phosphoglycerate + 2 H(+). RuBisCO catalyzes two reactions: the carboxylation of D-ribulose 1,5-bisphosphate, the primary event in carbon dioxide fixation, as well as the oxidative fragmentation of the pentose substrate in the photorespiration process. Both reactions occur simultaneously and in competition at the same active site. The chain is Ribulose bisphosphate carboxylase large chain from Fleroya rubrostipulata (Mitragyna rubrostipulata).